The primary structure comprises 345 residues: Fructose-bisphosphate aldolase, plasmid (345 aa).

Ser50 is a D-glyceraldehyde 3-phosphate binding site. Asp83 functions as the Proton donor in the catalytic mechanism. Zn(2+)-binding residues include His84, Asp105, Glu142, and His198. Gly199 contributes to the dihydroxyacetone phosphate binding site. His232 is a Zn(2+) binding site. Residues 233 to 235 and 275 to 278 contribute to the dihydroxyacetone phosphate site; these read GSS and NIDT.

The protein belongs to the class II fructose-bisphosphate aldolase family. Homodimer. The cofactor is Zn(2+).

It catalyses the reaction beta-D-fructose 1,6-bisphosphate = D-glyceraldehyde 3-phosphate + dihydroxyacetone phosphate. Its pathway is carbohydrate biosynthesis; Calvin cycle. It participates in carbohydrate degradation; glycolysis; D-glyceraldehyde 3-phosphate and glycerone phosphate from D-glucose: step 4/4. In terms of biological role, catalyzes the aldol condensation of dihydroxyacetone phosphate (DHAP or glycerone-phosphate) with glyceraldehyde 3-phosphate (G3P) to form fructose 1,6-bisphosphate (FBP) in gluconeogenesis and the reverse reaction in glycolysis. This chain is Fructose-bisphosphate aldolase, plasmid (cbbAP), found in Cupriavidus necator (strain ATCC 17699 / DSM 428 / KCTC 22496 / NCIMB 10442 / H16 / Stanier 337) (Ralstonia eutropha).